The following is a 340-amino-acid chain: Immunoglobulin-binding protein 1 (340 aa).

One can recognise a UIM domain in the interval 47–61 (LELLEKAAGMLSQLD). Positions 99–203 (RLDHLQRARE…HLLHLRRWIA (105 aa)) are interaction with PPP2CA. Disordered stretches follow at residues 223–242 (DSPREETACHSSLPEKPPMK) and 291–340 (SADF…QNMG). The interaction with MID1 stretch occupies residues 226–291 (REETACHSSL…PDRGIAKPAS (66 aa)). The residue at position 242 (K242) is an N6-acetyllysine. A compositionally biased stretch (low complexity) spans 292-301 (ADFQRAAQQQ). Positions 302-312 (EDQEQKDEESE) are enriched in acidic residues. A compositionally biased stretch (basic and acidic residues) spans 313–330 (EKALHRMREWDDWKDTHP).

Belongs to the IGBP1/TAP42 family. Interacts with PPP2CB, and with PP4 and PP6. Interacts with MID2. Interacts with ubiquitin. Interacts with partially folded PPP2CA, but not with the fully active protein. Interacts with MID1. Phosphorylated. In terms of processing, monoubiquitination by MID1 triggers calpain-mediated cleavage and switches IGBP1 activity from protective to destructive. In terms of tissue distribution, expressed in spleen, thymus, liver and brain. Ubiquitously expressed in B lineage cell lines.

It localises to the cytoplasm. Functionally, associated to surface IgM-receptor; may be involved in signal transduction. Involved in regulation of the catalytic activity of the phosphatases PP2A, PP4 and PP6 by protecting their partially folded catalytic subunits from degradative polyubiquitination until they associate with regulatory subunits. This chain is Immunoglobulin-binding protein 1 (Igbp1), found in Mus musculus (Mouse).